Reading from the N-terminus, the 349-residue chain is 1-acylglycerol-3-phosphate O-acyltransferase ABHD5 (349 aa).

N-acetylalanine is present on Ala-2. An AB hydrolase-1 domain is found at 77–185; the sequence is PLVLLHGFGG…VEPWGFPERP (109 aa). Residues 327–332 carry the HXXXXD motif motif; it reads HYVYAD.

This sequence belongs to the peptidase S33 family. ABHD4/ABHD5 subfamily. As to quaternary structure, interacts with ADRP, PLIN and PNPLA2. Interacts with PLIN5; promotes interaction with PNPLA2.

The protein localises to the cytoplasm. It is found in the lipid droplet. It catalyses the reaction a 1-acyl-sn-glycero-3-phosphate + an acyl-CoA = a 1,2-diacyl-sn-glycero-3-phosphate + CoA. It carries out the reaction 1-(9Z-octadecenoyl)-sn-glycero-3-phosphate + (9Z)-octadecenoyl-CoA = 1,2-di-(9Z-octadecenoyl)-sn-glycero-3-phosphate + CoA. The enzyme catalyses 1-(9Z-octadecenoyl)-sn-glycero-3-phosphate + hexadecanoyl-CoA = 1-(9Z)-octadecenoyl-2-hexadecanoyl-sn-glycero-3-phosphate + CoA. The catalysed reaction is 1-(9Z-octadecenoyl)-sn-glycero-3-phosphate + octadecanoyl-CoA = 1-(9Z-octadecenoyl)-2-octadecanoyl-sn-glycero-3-phosphate + CoA. It catalyses the reaction 1-(9Z-octadecenoyl)-sn-glycero-3-phosphate + (5Z,8Z,11Z,14Z)-eicosatetraenoyl-CoA = 1-(9Z)-octadecenoyl-2-(5Z,8Z,11Z,14Z)-eicosatetraenoyl-sn-glycero-3-phosphate + CoA. It carries out the reaction eicosanoyl-CoA + 1-(9Z-octadecenoyl)-sn-glycero-3-phosphate = 1-(9Z)-octadecenoyl-2-eicosanoyl-sn-glycero-3-phosphate + CoA. The enzyme catalyses 1-hexadecanoyl-sn-glycero-3-phosphate + (9Z)-octadecenoyl-CoA = 1-hexadecanoyl-2-(9Z-octadecenoyl)-sn-glycero-3-phosphate + CoA. The catalysed reaction is 1-octadecanoyl-sn-glycero-3-phosphate + (9Z)-octadecenoyl-CoA = 1-octadecanoyl-2-(9Z-octadecenoyl)-sn-glycero-3-phosphate + CoA. It catalyses the reaction 1-(5Z,8Z,11Z,14Z-eicosatetraenoyl)-sn-glycero-3-phosphate + (9Z)-octadecenoyl-CoA = 1-(5Z,8Z,11Z,14Z)-eicosatetraenoyl-2-(9Z)-octadecenoyl-sn-glycero-3-phosphate + CoA. Acyltransferase activity is inhibited by detergents such as Triton X-100 and 3-[(3-cholamidopropyl)dimethylammonio]-1-propanesulfonate (CHAPS). Acyltransferase activity is inhibited by the presence of magnesium and calcium. Its function is as follows. Coenzyme A-dependent lysophosphatidic acid acyltransferase that catalyzes the transfer of an acyl group on a lysophosphatidic acid. Functions preferentially with 1-oleoyl-lysophosphatidic acid followed by 1-palmitoyl-lysophosphatidic acid, 1-stearoyl-lysophosphatidic acid and 1-arachidonoyl-lysophosphatidic acid as lipid acceptor. Functions preferentially with arachidonoyl-CoA followed by oleoyl-CoA as acyl group donors. Functions in phosphatidic acid biosynthesis. May regulate the cellular storage of triacylglycerol through activation of the phospholipase PNPLA2. Involved in keratinocyte differentiation. Regulates lipid droplet fusion. This is 1-acylglycerol-3-phosphate O-acyltransferase ABHD5 from Sus scrofa (Pig).